Reading from the N-terminus, the 473-residue chain is Homeobox protein ATH1 (473 aa).

Residues 205-221 are SR/KY domain; that stretch reads SKYLHSVQEILSHFAAY. Residues 266–336 form a BELL domain region; that stretch reads QRRALEAKKT…NLRERICKKI (71 aa). Residues 372 to 434 constitute a DNA-binding region (homeobox); the sequence is IWRPQRGLPE…NARVRLWKPM (63 aa). The segment at 448 to 473 is disordered; the sequence is NNSHIQPNGPTLRMPKSVMMSQAMHK.

Belongs to the TALE/BELL homeobox family. As to quaternary structure, may form heterodimeric complex with the TALE/KNOX protein STM. In terms of tissue distribution, most abundant in flowers.

The protein resides in the nucleus. Transcription factor which may be involved in the signal transduction pathway downstream of the COP1 gene. Controls floral competency as a specific activator of FLC expression. Is responsive of the nuclear import of SHOOT MERISTEMLESS (STM). The protein is Homeobox protein ATH1 (ATH1) of Arabidopsis thaliana (Mouse-ear cress).